Reading from the N-terminus, the 577-residue chain is Moesin (577 aa).

The 294-residue stretch at 2 to 295 folds into the FERM domain; sequence PKTINVRVTT…GNHELYMRRR (294 aa). Ser74 carries the phosphoserine modification. At Lys79 the chain carries N6-acetyllysine. At Lys83 the chain carries N6-succinyllysine. A [IL]-x-C-x-x-[DE] motif motif is present at residues 115-120; sequence IYCPPE. Tyr116 carries the post-translational modification Phosphotyrosine. Cys117 bears the S-nitrosocysteine mark. N6-acetyllysine occurs at positions 139 and 165. Residues 376–414 show a composition bias toward basic and acidic residues; it reads EQERKRAQSEAEKLAKERQEAEEAKEALLKASRDQKKTQ. Disordered stretches follow at residues 376 to 415 and 434 to 518; these read EQERKRAQSEAEKLAKERQEAEEAKEALLKASRDQKKTQE and ARQK…NERV. At Ser407 the chain carries Phosphoserine. Residues 476 to 487 are compositionally biased toward acidic residues; the sequence is AENDQDEQDENG. The segment covering 492–518 has biased composition (basic and acidic residues); that stretch reads ADLRADAMAKDRSEEERTTEAEKNERV. Ser527 carries the post-translational modification Phosphoserine. At Thr558 the chain carries Phosphothreonine; by ROCK2 and STK10.

As to quaternary structure, binds NHERF1. In resting T-cells, part of a PAG1-NHERF1-MSN complex which is disrupted upon TCR activation. Interacts with PPP1R16B. Interacts with PDZD8. Interacts with SELPLG and SYK; mediates the activation of SYK by SELPLG. Interacts with PDPN (via cytoplasmic domain); activates RHOA and promotes epithelial-mesenchymal transition. Interacts with SPN/CD43 cytoplasmic tail, CD44 and ICAM2. In terms of processing, phosphorylation on Thr-558 is crucial for the formation of microvilli-like structures. Phosphorylation by ROCK2 suppresses the head-to-tail association of the N-terminal and C-terminal halves resulting in an opened conformation which is capable of actin and membrane-binding. Phosphorylation on Thr-558 by STK10 negatively regulates lymphocyte migration and polarization. Post-translationally, S-nitrosylation of Cys-117 is induced by interferon-gamma and oxidatively-modified low-densitity lipoprotein (LDL(ox)) implicating the iNOS-S100A8/9 transnitrosylase complex.

Its subcellular location is the cell membrane. The protein localises to the cytoplasm. It is found in the cytoskeleton. The protein resides in the apical cell membrane. It localises to the cell projection. Its subcellular location is the microvillus membrane. The protein localises to the microvillus. A head-to-tail association, of the N-terminal and C-terminal halves results in a closed conformation (inactive form) which is incapable of actin or membrane-binding. In terms of biological role, probably involved in connections of major cytoskeletal structures to the plasma membrane. Plays a role in regulating the proliferation, migration, and adhesion of human lymphoid cells and participates in immunologic synapse formation. This chain is Moesin, found in Sus scrofa (Pig).